The chain runs to 216 residues: Protein-L-isoaspartate O-methyltransferase (216 aa).

S64 is a catalytic residue.

This sequence belongs to the methyltransferase superfamily. L-isoaspartyl/D-aspartyl protein methyltransferase family.

Its subcellular location is the cytoplasm. The catalysed reaction is [protein]-L-isoaspartate + S-adenosyl-L-methionine = [protein]-L-isoaspartate alpha-methyl ester + S-adenosyl-L-homocysteine. Functionally, catalyzes the methyl esterification of L-isoaspartyl residues in peptides and proteins that result from spontaneous decomposition of normal L-aspartyl and L-asparaginyl residues. It plays a role in the repair and/or degradation of damaged proteins. The protein is Protein-L-isoaspartate O-methyltransferase of Paracoccus denitrificans (strain Pd 1222).